A 315-amino-acid chain; its full sequence is Taste receptor type 2 member 3 (315 aa).

Topologically, residues 1 to 5 (MGLTD) are extracellular. Residues 6–26 (GVFLIVCGAQFTLGILXNGFI) form a helical membrane-spanning segment. The Cytoplasmic segment spans residues 27-41 (GLVNGRSWFKTKRMS). Residues 42–62 (LSDFIIATLALSRIILLCIIL) form a helical membrane-spanning segment. Residues 63-93 (TDSFLIVFSVKEHDSGIIMQLIDVFWTFTNH) lie on the Extracellular side of the membrane. A helical transmembrane segment spans residues 94 to 114 (LSIWFATCLGVLYCLKIASFS). Over 115 to 127 (HPTFLWLKWRVSR) the chain is Cytoplasmic. A helical membrane pass occupies residues 128 to 148 (VMVWMLLGALLLSCGSTASLI). At 149–185 (NEFKLYSVLRGIEATRNVTEHFRKKRNEYYLIHVLGT) the chain is on the extracellular side. The N-linked (GlcNAc...) asparagine glycan is linked to Asn-165. Residues 186–206 (LWYLPPLVVSLASYFLLIFSL) form a helical membrane-spanning segment. Topologically, residues 207-233 (GRHTRQMLQNSTSSRDPSTEAHKRAIR) are cytoplasmic. Residues 234–254 (IILSFFFLFLLYFLAFLIASF) traverse the membrane as a helical segment. Over 255–265 (GNFLPETKMAK) the chain is Extracellular. A helical membrane pass occupies residues 266–286 (MIGEVMTMFYPAGHSFIVILG). Topologically, residues 287–315 (NSKLKQTFVEMLRCESGHLKPGSKGPIFS) are cytoplasmic.

The protein belongs to the G-protein coupled receptor T2R family.

The protein resides in the membrane. Gustducin-coupled receptor implicated in the perception of bitter compounds in the oral cavity and the gastrointestinal tract. Signals through PLCB2 and the calcium-regulated cation channel TRPM5. This Papio hamadryas (Hamadryas baboon) protein is Taste receptor type 2 member 3 (TAS2R3).